Consider the following 224-residue polypeptide: Phosphoribosylformylglycinamidine synthase subunit PurQ (224 aa).

A Glutamine amidotransferase type-1 domain is found at 4 to 224; it reads FGIIVFPGSN…ATDGLAMFIS (221 aa). C87 acts as the Nucleophile in catalysis. Residues H204 and E206 contribute to the active site.

As to quaternary structure, part of the FGAM synthase complex composed of 1 PurL, 1 PurQ and 2 PurS subunits.

Its subcellular location is the cytoplasm. It catalyses the reaction N(2)-formyl-N(1)-(5-phospho-beta-D-ribosyl)glycinamide + L-glutamine + ATP + H2O = 2-formamido-N(1)-(5-O-phospho-beta-D-ribosyl)acetamidine + L-glutamate + ADP + phosphate + H(+). The enzyme catalyses L-glutamine + H2O = L-glutamate + NH4(+). Its pathway is purine metabolism; IMP biosynthesis via de novo pathway; 5-amino-1-(5-phospho-D-ribosyl)imidazole from N(2)-formyl-N(1)-(5-phospho-D-ribosyl)glycinamide: step 1/2. Part of the phosphoribosylformylglycinamidine synthase complex involved in the purines biosynthetic pathway. Catalyzes the ATP-dependent conversion of formylglycinamide ribonucleotide (FGAR) and glutamine to yield formylglycinamidine ribonucleotide (FGAM) and glutamate. The FGAM synthase complex is composed of three subunits. PurQ produces an ammonia molecule by converting glutamine to glutamate. PurL transfers the ammonia molecule to FGAR to form FGAM in an ATP-dependent manner. PurS interacts with PurQ and PurL and is thought to assist in the transfer of the ammonia molecule from PurQ to PurL. This is Phosphoribosylformylglycinamidine synthase subunit PurQ from Synechocystis sp. (strain ATCC 27184 / PCC 6803 / Kazusa).